The sequence spans 162 residues: MVDPNLVTFVLTIVNILVLFYLLKRFLFKPIGEFMENRKNEIKQNLEDAEKERQEAEKLKEQYYEKLRGAKSEAQEIIQQARQREEEIIKEAKQEAKQEADDMIARAREEINQEQKKAIESLRSEVSDLTIQITERVLNDTIDKDQQKKLVQKYLKEVGRVS.

A helical membrane pass occupies residues 6 to 28 (LVTFVLTIVNILVLFYLLKRFLF).

The protein belongs to the ATPase B chain family. F-type ATPases have 2 components, F(1) - the catalytic core - and F(0) - the membrane proton channel. F(1) has five subunits: alpha(3), beta(3), gamma(1), delta(1), epsilon(1). F(0) has three main subunits: a(1), b(2) and c(10-14). The alpha and beta chains form an alternating ring which encloses part of the gamma chain. F(1) is attached to F(0) by a central stalk formed by the gamma and epsilon chains, while a peripheral stalk is formed by the delta and b chains.

The protein resides in the cell membrane. In terms of biological role, f(1)F(0) ATP synthase produces ATP from ADP in the presence of a proton or sodium gradient. F-type ATPases consist of two structural domains, F(1) containing the extramembraneous catalytic core and F(0) containing the membrane proton channel, linked together by a central stalk and a peripheral stalk. During catalysis, ATP synthesis in the catalytic domain of F(1) is coupled via a rotary mechanism of the central stalk subunits to proton translocation. Functionally, component of the F(0) channel, it forms part of the peripheral stalk, linking F(1) to F(0). The sequence is that of ATP synthase subunit b from Natranaerobius thermophilus (strain ATCC BAA-1301 / DSM 18059 / JW/NM-WN-LF).